We begin with the raw amino-acid sequence, 428 residues long: Maltoporin (428 aa).

The signal sequence occupies residues 1–24 (MTTLRKLPIALAVAAGVLSTQAMA).

It belongs to the porin LamB (TC 1.B.3) family. In terms of assembly, homotrimer formed of three 18-stranded antiparallel beta-barrels, containing three independent channels.

The protein localises to the cell outer membrane. The catalysed reaction is beta-maltose(in) = beta-maltose(out). In terms of biological role, involved in the transport of maltose and maltodextrins. The polypeptide is Maltoporin (Yersinia enterocolitica serotype O:8 / biotype 1B (strain NCTC 13174 / 8081)).